The sequence spans 597 residues: Nuclear receptor subfamily 4 group A member 1 (597 aa).

The interval 1–22 is disordered; it reads MPCIQAQYGTPATSPGPRDHLT. Residues 170-465 are required for nuclear import; sequence RVWTEQLPKA…PGEGKLIFCS (296 aa). Positions 263 to 338 form a DNA-binding region, nuclear receptor; the sequence is EGRCAVCGDN…VGMVKEVVRT (76 aa). 2 NR C4-type zinc fingers span residues 266–286 and 302–326; these read CAVC…CEGC and CLAN…FQKC. The required for binding NBRE-containing DNA stretch occupies residues 267-353; sequence AVCGDNASCQ…RRGRLPSKPK (87 aa). A required for the interaction with RXRA region spans residues 298–360; sequence AKYICLANKD…KPKQPPDASP (63 aa). Ser340 bears the Phosphoserine; by PKA mark. The interval 341 to 360 is disordered; that stretch reads LKGRRGRLPSKPKQPPDASP. Phosphoserine; by PKA, RPS6KA1 and RPS6KA3 is present on Ser350. The NR LBD domain maps to 359 to 594; sequence SPTNLLTSLI…PIVDKIFMDT (236 aa). The tract at residues 520 to 543 is binds lipopolysaccharide; sequence PRRVEELQNRIASCLKEHMAAVAG. The interval 583 to 594 is AF-2; that stretch reads PPPIVDKIFMDT.

The protein belongs to the nuclear hormone receptor family. NR4 subfamily. Binds the NGFI-B response element (NBRE) as a monomer. Binds the Nur response element (NurRE), consisting of two inverse NBRE-related octanucleotide repeats separated by 6 base-pairs, as a dimer. Interacts (via N-terminus) with NLRP3 (via LRR repeat domain); the interaction is direct, requires binding of NR4A1/Nur77 to NBRE-containing dsDNA and lipopolysaccharide, and leads to non-canonical NLRP3 inflammasome activation. Interacts with GADD45GIP1. Interacts with STK11. Interacts with IFI27. Heterodimer (via DNA-binding domain) with RXRA (via C-terminus); DNA-binding of the heterodimer is enhanced by 9-cis retinoic acid. Competes for the RXRA interaction with EP300 and thereby attenuates EP300 mediated acetylation of RXRA. Interacts with NCOA1. Interacts with NCOA2. Interacts with NCOA3. Zn(2+) serves as cofactor. Post-translationally, phosphorylated at Ser-350 by RPS6KA1 and RPS6KA3 in response to mitogenic or stress stimuli. Phosphorylation of Ser-350 results in decrease in NBRE binding while phosphorylation of Ser-340 has little effect on it. Acetylated by p300/CBP, acetylation increases stability. Deacetylated by HDAC1. In terms of tissue distribution, expressed in lung, brain and superior cervical ganglia. High levels are seen in the adrenal tissue.

Its subcellular location is the nucleus. It localises to the cytoplasm. It is found in the cytosol. The protein localises to the mitochondrion. Orphan nuclear receptor. Binds the NGFI-B response element (NBRE) 5'-AAAGGTCA-3'. Binds 9-cis-retinoic acid outside of its ligand-binding (NR LBD) domain. Participates in energy homeostasis by sequestrating the kinase STK11 in the nucleus, thereby attenuating cytoplasmic AMPK activation. Regulates the inflammatory response in macrophages by regulating metabolic adaptations during inflammation, including repressing the transcription of genes involved in the citric acid cycle (TCA). Inhibits NF-kappa-B signaling by binding to low-affinity NF-kappa-B binding sites, such as at the IL2 promoter. May act concomitantly with NR4A2 in regulating the expression of delayed-early genes during liver regeneration. Plays a role in the vascular response to injury. Functionally, in the cytosol, upon its detection of both bacterial lipopolysaccharide (LPS) and NBRE-containing mitochondrial DNA released by GSDMD pores during pyroptosis, it promotes non-canonical NLRP3 inflammasome activation by stimulating association of NLRP3 and NEK7. This chain is Nuclear receptor subfamily 4 group A member 1 (Nr4a1), found in Rattus norvegicus (Rat).